We begin with the raw amino-acid sequence, 420 residues long: Polymerase delta-interacting protein 3 (420 aa).

The residue at position 2 (Ala-2) is an N-acetylalanine. Position 5 is a phosphoserine (Ser-5). Arg-33 bears the Omega-N-methylarginine mark. Residue Ser-127 is modified to Phosphoserine. Thr-140 is subject to Phosphothreonine. Lys-200 is covalently cross-linked (Glycyl lysine isopeptide (Lys-Gly) (interchain with G-Cter in SUMO2)). Residues Ser-215 and Ser-217 each carry the phosphoserine modification. A Glycyl lysine isopeptide (Lys-Gly) (interchain with G-Cter in SUMO2) cross-link involves residue Lys-223. Ser-244 is modified (phosphoserine). Lys-248 is covalently cross-linked (Glycyl lysine isopeptide (Lys-Gly) (interchain with G-Cter in SUMO2)). The disordered stretch occupies residues 256 to 277; the sequence is TLVNKEEPPKELPPAEPVLSPL. A Phosphoserine modification is found at Ser-275. An RRM domain is found at 280–351; that stretch reads TKMTVNNLHP…QPMKCNLHMN (72 aa). The interval 369–394 is disordered; it reads PSVKKESELPRRGNPASSNPPAEVDP. The segment covering 370-379 has biased composition (basic and acidic residues); the sequence is SVKKESELPR. Lys-372 participates in a covalent cross-link: Glycyl lysine isopeptide (Lys-Gly) (interchain with G-Cter in SUMO2). Ser-385 is subject to Phosphoserine. Residue Lys-417 forms a Glycyl lysine isopeptide (Lys-Gly) (interchain with G-Cter in SUMO2) linkage.

As to quaternary structure, interacts with POLD2. Interacts with NCBP1 and EIF4A3. Associates with the multiprotein exon junction complex (EJC). Interacts with RPS6KB1 (activated). Interacts with ERH. Interacts with THOC2, DDX39B and ZC3H11A; the interactions are ATP-dependent and indicative for an association with the TREX complex.

The protein resides in the nucleus. It localises to the nucleus speckle. Its subcellular location is the cytoplasm. Is involved in regulation of translation. Is preferentially associated with CBC-bound spliced mRNA-protein complexes during the pioneer round of mRNA translation. Contributes to enhanced translational efficiency of spliced over nonspliced mRNAs. Recruits activated ribosomal protein S6 kinase beta-1 I/RPS6KB1 to newly synthesized mRNA. Involved in nuclear mRNA export; probably mediated by association with the TREX complex. The sequence is that of Polymerase delta-interacting protein 3 (Poldip3) from Mus musculus (Mouse).